We begin with the raw amino-acid sequence, 656 residues long: Mucin-20 (656 aa).

The first 21 residues, 1–21 (MGSVWGLAVPLLVFCWKVGVS), serve as a signal peptide directing secretion. 3 stretches are compositionally biased toward polar residues: residues 85-96 (ATSISSEVNSRD), 114-125 (PAASSLEAQTTS), and 159-170 (TTSPAPSFLDTQ). Disordered regions lie at residues 85–125 (ATSI…QTTS), 159–232 (TTSP…TQTI), and 329–348 (YLSS…LSSS). A compositionally biased stretch (low complexity) spans 171-227 (TTSPEPSSLTTSPAPSSLITSPTPSSLTTSPAPSFLDTQTTSPAPSSLTTSPAPSSL). 5 tandem repeats follow at residues 180 to 188 (TTSPAPSSL), 189 to 197 (ITSPTPSSL), 198 to 206 (TTSPAPSFL), 210 to 218 (TTSPAPSSL), and 219 to 227 (TTSPAPSSL). The interval 180 to 227 (TTSPAPSSLITSPTPSSLTTSPAPSFLDTQTTSPAPSSLTTSPAPSSL) is approximate repeats. 2 N-linked (GlcNAc...) asparagine glycosylation sites follow: Asn-366 and Asn-570. The interval 399 to 603 (TAALFTSEIL…WIRKTTKHDP (205 aa)) is involved in oligomerization. Polar residues predominate over residues 560-573 (STTASTSKNPNITL). Positions 560–592 (STTASTSKNPNITLTKTTASPKPPTHPTTSAST) are disordered. The segment at 604 to 656 (GEDGGFLLVRLTVASPKDLTEHNAREKLMNQLRRELHARMPLVHMSFLSIRRG) is interaction with MET.

Interacts with MET; oligomerization increases affinity for MET. In terms of tissue distribution, highly expressed in kidney. Up-regulated in renal tissues during renal injury.

It localises to the secreted. Its subcellular location is the apical cell membrane. It is found in the basolateral cell membrane. The protein localises to the cell projection. The protein resides in the microvillus membrane. In terms of biological role, may regulate MET signaling cascade. Seems to decrease hepatocyte growth factor (HGF)-induced transient MAPK activation. Blocks GRB2 recruitment to MET thus suppressing the GRB2-RAS pathway. Inhibits HGF-induced proliferation of MMP1 and MMP9 expression. This is Mucin-20 (Muc20) from Mus musculus (Mouse).